The chain runs to 94 residues: MALSPEEVNHVAMLARLALSEDEKTAFAEQLTLILDYVERLNELDTGEVEPLIHILPVFNVLRQDEALPGSSQEEILSNAPLVEDGQYKVPRII.

The protein belongs to the GatC family. In terms of assembly, heterotrimer of A, B and C subunits.

The enzyme catalyses L-glutamyl-tRNA(Gln) + L-glutamine + ATP + H2O = L-glutaminyl-tRNA(Gln) + L-glutamate + ADP + phosphate + H(+). The catalysed reaction is L-aspartyl-tRNA(Asn) + L-glutamine + ATP + H2O = L-asparaginyl-tRNA(Asn) + L-glutamate + ADP + phosphate + 2 H(+). In terms of biological role, allows the formation of correctly charged Asn-tRNA(Asn) or Gln-tRNA(Gln) through the transamidation of misacylated Asp-tRNA(Asn) or Glu-tRNA(Gln) in organisms which lack either or both of asparaginyl-tRNA or glutaminyl-tRNA synthetases. The reaction takes place in the presence of glutamine and ATP through an activated phospho-Asp-tRNA(Asn) or phospho-Glu-tRNA(Gln). The protein is Aspartyl/glutamyl-tRNA(Asn/Gln) amidotransferase subunit C of Syntrophomonas wolfei subsp. wolfei (strain DSM 2245B / Goettingen).